Here is a 350-residue protein sequence, read N- to C-terminus: Biotin synthase (350 aa).

The Radical SAM core domain occupies 38–256 (NYVQVSTLLS…IAVARIMMPT (219 aa)). [4Fe-4S] cluster-binding residues include Cys53, Cys57, and Cys60. The [2Fe-2S] cluster site is built by Cys97, Cys128, Cys188, and Arg260.

Belongs to the radical SAM superfamily. Biotin synthase family. As to quaternary structure, homodimer. The cofactor is [4Fe-4S] cluster. [2Fe-2S] cluster is required as a cofactor.

It carries out the reaction (4R,5S)-dethiobiotin + (sulfur carrier)-SH + 2 reduced [2Fe-2S]-[ferredoxin] + 2 S-adenosyl-L-methionine = (sulfur carrier)-H + biotin + 2 5'-deoxyadenosine + 2 L-methionine + 2 oxidized [2Fe-2S]-[ferredoxin]. Its pathway is cofactor biosynthesis; biotin biosynthesis; biotin from 7,8-diaminononanoate: step 2/2. Its function is as follows. Catalyzes the conversion of dethiobiotin (DTB) to biotin by the insertion of a sulfur atom into dethiobiotin via a radical-based mechanism. The chain is Biotin synthase from Vibrio vulnificus (strain CMCP6).